We begin with the raw amino-acid sequence, 292 residues long: 4-diphosphocytidyl-2-C-methyl-D-erythritol kinase (292 aa).

Lys13 is an active-site residue. Residue 97 to 107 (PVAAGLAGGSS) participates in ATP binding. The active site involves Asp139.

The protein belongs to the GHMP kinase family. IspE subfamily.

It catalyses the reaction 4-CDP-2-C-methyl-D-erythritol + ATP = 4-CDP-2-C-methyl-D-erythritol 2-phosphate + ADP + H(+). It participates in isoprenoid biosynthesis; isopentenyl diphosphate biosynthesis via DXP pathway; isopentenyl diphosphate from 1-deoxy-D-xylulose 5-phosphate: step 3/6. Catalyzes the phosphorylation of the position 2 hydroxy group of 4-diphosphocytidyl-2C-methyl-D-erythritol. The protein is 4-diphosphocytidyl-2-C-methyl-D-erythritol kinase of Bacillus thuringiensis (strain Al Hakam).